Consider the following 461-residue polypeptide: Cysteine--tRNA ligase (461 aa).

C29 serves as a coordination point for Zn(2+). Residues 31-41 (MTVYDFCHIGH) carry the 'HIGH' region motif. Residues C210, H235, and E239 each contribute to the Zn(2+) site. Positions 267–271 (KMSKS) match the 'KMSKS' region motif. K270 is an ATP binding site.

The protein belongs to the class-I aminoacyl-tRNA synthetase family. As to quaternary structure, monomer. Zn(2+) serves as cofactor.

It is found in the cytoplasm. It carries out the reaction tRNA(Cys) + L-cysteine + ATP = L-cysteinyl-tRNA(Cys) + AMP + diphosphate. In Ectopseudomonas mendocina (strain ymp) (Pseudomonas mendocina), this protein is Cysteine--tRNA ligase.